A 105-amino-acid polypeptide reads, in one-letter code: Large ribosomal subunit protein P2 (105 aa).

Residues 84–105 (AEAKKEEPEEEADDDMGFGLFD) are disordered.

Belongs to the eukaryotic ribosomal protein P1/P2 family. In terms of assembly, P1 and P2 exist as dimers at the large ribosomal subunit. Post-translationally, phosphorylated.

Its function is as follows. Plays an important role in the elongation step of protein synthesis. The polypeptide is Large ribosomal subunit protein P2 (ARP-1) (Leishmania donovani).